A 188-amino-acid chain; its full sequence is Transcription factor E (188 aa).

Positions 9 to 98 (DLEVLRDVTL…SWRLNLREVL (90 aa)) constitute an HTH TFE/IIEalpha-type domain.

The protein belongs to the TFE family. As to quaternary structure, monomer. Interaction with RNA polymerase subunits RpoF and RpoE is necessary for Tfe stimulatory transcription activity. Able to interact with Tbp and RNA polymerase in the absence of DNA promoter. Interacts both with the preinitiation and elongation complexes.

Functionally, transcription factor that plays a role in the activation of archaeal genes transcribed by RNA polymerase. Facilitates transcription initiation by enhancing TATA-box recognition by TATA-box-binding protein (Tbp), and transcription factor B (Tfb) and RNA polymerase recruitment. Not absolutely required for transcription in vitro, but particularly important in cases where Tbp or Tfb function is not optimal. It dynamically alters the nucleic acid-binding properties of RNA polymerases by stabilizing the initiation complex and destabilizing elongation complexes. Seems to translocate with the RNA polymerase following initiation and acts by binding to the non template strand of the transcription bubble in elongation complexes. In Methanopyrus kandleri (strain AV19 / DSM 6324 / JCM 9639 / NBRC 100938), this protein is Transcription factor E.